Consider the following 86-residue polypeptide: Small ribosomal subunit protein uS17 (86 aa).

Belongs to the universal ribosomal protein uS17 family. In terms of assembly, part of the 30S ribosomal subunit.

Functionally, one of the primary rRNA binding proteins, it binds specifically to the 5'-end of 16S ribosomal RNA. The polypeptide is Small ribosomal subunit protein uS17 (Shouchella clausii (strain KSM-K16) (Alkalihalobacillus clausii)).